A 298-amino-acid polypeptide reads, in one-letter code: Ribosomal protein L11 methyltransferase (298 aa).

T152, G173, D195, and N234 together coordinate S-adenosyl-L-methionine.

This sequence belongs to the methyltransferase superfamily. PrmA family.

It localises to the cytoplasm. It catalyses the reaction L-lysyl-[protein] + 3 S-adenosyl-L-methionine = N(6),N(6),N(6)-trimethyl-L-lysyl-[protein] + 3 S-adenosyl-L-homocysteine + 3 H(+). In terms of biological role, methylates ribosomal protein L11. The polypeptide is Ribosomal protein L11 methyltransferase (Ralstonia pickettii (strain 12J)).